Reading from the N-terminus, the 868-residue chain is MHEQYTPRDIEAAAQKFWDEQQSFAVTEQPGKDTYYCLSMFPYPSGKLHMGHVRNYTIGDVIARYQRMLGKNVLQPMGWDAFGMPAENAAMKNNVAPAKWTYENIDYMKTQLKSLGLAIDWAREVTTCKPDYYRWEQWLFTRLFEKGIIYRKNGTVNWDPADQTVLANEQVIDGRGWRSGALIEKREIPMYYFRITDYADELLESLDELPGWPEQVKTMQRNWIGKSRGMEVQFPYDKASIGHEGTLKVFTTRPDTLMGATYVAVAAEHPLATQAAQGNPALQAFIDECKSGSVAEADMATQEKKGMATSLLVEHPLTGEKLPVWVANYVLMHYGDGAVMAVPAHDERDFEFAHKYNLPVKAVVRTSAGDEVGSEWQAAYGEHGQLINSAEFDGLDFAGAFDAIEAALIRKELGKSRTQFRLRDWGISRQRYWGCPIPIIHCPSCGDVPVPEDQLPVTLPENVVPDGAGSPLARMPEFYECSCPKCGAAAKRETDTMDTFVESSWYFARYASPNYDKGLVDPKAANHWLPVDQYIGGIEHAILHLLYARFFHKLMRDEGLVTSNEPFKNLLTQGMVVAETYYRVASNGGKDWFNPADVEIERDAKAKIIGARLKTDGLPVEIGGTEKMSKSKNNGVDPQSMIEAYGADTCRLFMMFASPPDMSLEWSDSGVEGASRFLRRVWRLAQAHVSQGLPGKLDVAALDDAQKVIRRAIHAAIKQASTDVGQFHKFNTAIAQVMTVMNVLEKAPQATEQDRALLQEGLEAVTLLLAPITPHISHALWQHLGHAGSVIDAAWPSVDEQALVQDSITLVVQVNGKLRGQVEMPAAASREEVEAAARSNENVLRFIDGLTIRKVIVVPGKLVNIVAN.

The short motif at 42–52 is the 'HIGH' region element; it reads PYPSGKLHMGH. The short motif at 627–631 is the 'KMSKS' region element; the sequence is KMSKS. Lys630 contacts ATP.

It belongs to the class-I aminoacyl-tRNA synthetase family.

It is found in the cytoplasm. The catalysed reaction is tRNA(Leu) + L-leucine + ATP = L-leucyl-tRNA(Leu) + AMP + diphosphate. This chain is Leucine--tRNA ligase, found in Pseudomonas putida (strain ATCC 47054 / DSM 6125 / CFBP 8728 / NCIMB 11950 / KT2440).